Reading from the N-terminus, the 443-residue chain is MRDVPNIGFISLGCPKNLVDSERILTELRSDGYNIIPSYENADLVIVNTCGFIDSAVQESLEAVGEALKENGKVIVTGCLGAKENQIREVHPKVLEITGPHSYEAVMQHVHKYVPRPERNMYTSLVPAQGVKLTPKHYAYLKISEGCDHRCTFCIIPSMRGDLDSRPIVQILDEAKRLADSGVKELLIVSQDTSAYALDQTKENQNKTVFWNGVPIKNNLISLCEQLATLGIWIRLHYVYPYPHVDNLIPLMAEGKILPYLDIPLQHASPKILKAMKRPGSIDRTLERIKQWREICPELTLRSTFIVGFPGETEEDFQMLLDFLTEAQLDRVGCFKFSPVDGAVATEMAEQVPEEVKEERFHRFMQVQQRISVARLQQKIGKTLAIIIDEIDEYGIIGRSMADAPEIDGVVYVDNISQQAVTVGQIILVTITNADEYDLWGTY.

The 111-residue stretch at 5–115 (PNIGFISLGC…VMQHVHKYVP (111 aa)) folds into the MTTase N-terminal domain. 6 residues coordinate [4Fe-4S] cluster: Cys14, Cys50, Cys79, Cys147, Cys151, and Cys154. Positions 133–374 (LTPKHYAYLK…MQVQQRISVA (242 aa)) constitute a Radical SAM core domain. One can recognise a TRAM domain in the interval 377-443 (QQKIGKTLAI…ADEYDLWGTY (67 aa)).

The protein belongs to the methylthiotransferase family. RimO subfamily. It depends on [4Fe-4S] cluster as a cofactor.

It localises to the cytoplasm. It catalyses the reaction L-aspartate(89)-[ribosomal protein uS12]-hydrogen + (sulfur carrier)-SH + AH2 + 2 S-adenosyl-L-methionine = 3-methylsulfanyl-L-aspartate(89)-[ribosomal protein uS12]-hydrogen + (sulfur carrier)-H + 5'-deoxyadenosine + L-methionine + A + S-adenosyl-L-homocysteine + 2 H(+). Functionally, catalyzes the methylthiolation of an aspartic acid residue of ribosomal protein uS12. In Haemophilus ducreyi (strain 35000HP / ATCC 700724), this protein is Ribosomal protein uS12 methylthiotransferase RimO.